Here is a 596-residue protein sequence, read N- to C-terminus: Alkaline phosphatase 4 (596 aa).

The N-terminal stretch at Met1–Ala20 is a signal peptide. Asp93 provides a ligand contact to Mg(2+). Asp93 contacts Zn(2+). The Phosphoserine intermediate role is filled by Ser144. Residues His202 and Thr204 each coordinate Mg(2+). Residues Asn262 and Asn297 are each glycosylated (N-linked (GlcNAc...) asparagine). Residue Glu369 coordinates Mg(2+). Zn(2+) is bound by residues Asp374 and His378. Asn401 carries an N-linked (GlcNAc...) asparagine glycan. Zn(2+) contacts are provided by Asp415 and His416. N-linked (GlcNAc...) asparagine glycans are attached at residues Asn464 and Asn470. His504 is a Zn(2+) binding site. Cysteines 539 and 550 form a disulfide. The span at Asp548 to Asn566 shows a compositional bias: basic and acidic residues. A disordered region spans residues Asp548–Asn570. The GPI-anchor amidated asparagine moiety is linked to residue Asn570. The chain crosses the membrane as a helical span at residues Gly571 to Leu591. Positions Gly571–Leu596 are cleaved as a propeptide — removed in mature form.

The protein belongs to the alkaline phosphatase family. In terms of assembly, homodimer. Requires Mg(2+) as cofactor. The cofactor is Zn(2+). In terms of tissue distribution, ellipsoid body ring neurons in the adult brain and in the lower Malpighian tubule and ureter.

It localises to the cell membrane. It catalyses the reaction a phosphate monoester + H2O = an alcohol + phosphate. Its function is as follows. Important role in neural and renal epithelial function. In Drosophila melanogaster (Fruit fly), this protein is Alkaline phosphatase 4.